A 99-amino-acid chain; its full sequence is Pterin-4-alpha-carbinolamine dehydratase (99 aa).

The protein belongs to the pterin-4-alpha-carbinolamine dehydratase family.

The catalysed reaction is (4aS,6R)-4a-hydroxy-L-erythro-5,6,7,8-tetrahydrobiopterin = (6R)-L-erythro-6,7-dihydrobiopterin + H2O. Functionally, involved in tetrahydrobiopterin biosynthesis. In Dictyostelium discoideum (Social amoeba), this protein is Pterin-4-alpha-carbinolamine dehydratase (pcbd).